The sequence spans 510 residues: MAQEPPRKQKVVIVGAGPVGSLAALYAAARGDDVEVYELRGDLRDPTTIPLNFTKSINLALSERGISSLKGSNRDGMIEKILNDAIPMHGRMIHGRDDGKLWEAAQAYDVHGQAINSVDRSTLNNALLDELERTPNVKLFFNHKLTGADFQSNRAWFERRAPGDTPLPGSSNRVPEIEVSFDYMIGADGAHSASRYHMMKYSRVDYQQEYIDTLWCEFRIPPSDTGDFRISPNHLHIWPGKEFMFIALPSPDKSFTCTLFAPAAHYAQLESSPQKLFLSFDANFPGVSPDLITPEDLQEQFKENPHLPLISIKAKPHHYGSNIVIVGDAAHAILPFYGQGLNAGLEDIRVLFDFLDKHDAFDLNASLTARRESRRAAFQAYTDQRTADAHAINDLSKQNYLEMRWGVKTPLYKIRKSIEEALDLYVPSLGWKTQYARVSFSTQRYSDVVKVVHRQGRILGYGFASAVISSITIAGILAWKIPGRLSPLPALQSTVQLLGHVWTKISPKNT.

The protein belongs to the aromatic-ring hydroxylase family. KMO subfamily. Requires FAD as cofactor.

The protein localises to the mitochondrion outer membrane. It catalyses the reaction L-kynurenine + NADPH + O2 + H(+) = 3-hydroxy-L-kynurenine + NADP(+) + H2O. The protein operates within cofactor biosynthesis; NAD(+) biosynthesis; quinolinate from L-kynurenine: step 1/3. Functionally, catalyzes the hydroxylation of L-kynurenine (L-Kyn) to form 3-hydroxy-L-kynurenine (L-3OHKyn). Required for synthesis of quinolinic acid. The chain is Kynurenine 3-monooxygenase (bna4) from Aspergillus oryzae (strain ATCC 42149 / RIB 40) (Yellow koji mold).